The sequence spans 168 residues: Large ribosomal subunit protein uL10 (168 aa).

The protein belongs to the universal ribosomal protein uL10 family. As to quaternary structure, part of the ribosomal stalk of the 50S ribosomal subunit. The N-terminus interacts with L11 and the large rRNA to form the base of the stalk. The C-terminus forms an elongated spine to which L12 dimers bind in a sequential fashion forming a multimeric L10(L12)X complex.

In terms of biological role, forms part of the ribosomal stalk, playing a central role in the interaction of the ribosome with GTP-bound translation factors. The polypeptide is Large ribosomal subunit protein uL10 (Paracidovorax citrulli (strain AAC00-1) (Acidovorax citrulli)).